The following is a 479-amino-acid chain: Xylose isomerase (479 aa).

Residue histidine 144 is part of the active site. Mn(2+)-binding residues include glutamate 275, glutamate 311, histidine 314, aspartate 339, aspartate 350, aspartate 352, and tyrosine 382.

Belongs to the xylose isomerase family. Homodimer. Mn(2+) is required as a cofactor.

The enzyme catalyses alpha-D-xylose = alpha-D-xylulofuranose. In Hordeum vulgare (Barley), this protein is Xylose isomerase (XYLA).